Consider the following 621-residue polypeptide: Cyclic nucleotide-gated ion channel 11 (621 aa).

Residues 1-43 (MNLQRRKFVRLDSTGVDGKLKSVRGRLKKVYGKMKTLENWRKT) are Cytoplasmic-facing. Residues 44 to 64 (VLLACVVALAIDPLFLFIPLI) traverse the membrane as a helical segment. Over 65-76 (DSQRFCFTFDKT) the chain is Extracellular. Residues 77–97 (LVAVVCVIRTFIDTFYVIHII) form a helical membrane-spanning segment. Residues 98–128 (YYLITETIAPRSQASLRGEIVVHSKATLKTR) lie on the Cytoplasmic side of the membrane. Residues 129 to 149 (LLFHFIVDIISVLPIPQVVVL) form a helical membrane-spanning segment. Over 150–162 (TLIPLSASLVSER) the chain is Extracellular. A helical transmembrane segment spans residues 163–183 (ILKWIILSQYVPRIIRMYPLY). The Cytoplasmic portion of the chain corresponds to 184 to 198 (KEVTRAFGTVAESKR). The chain crosses the membrane as a helical span at residues 199 to 219 (VGAALNFFLYMLHSYVCGAFW). Residues 220–329 (YLSSIERKST…QNLETSNSAG (110 aa)) are Extracellular-facing. The helical transmembrane segment at 330 to 350 (EIFFAIIICVSGLLLFAVLIG) threads the bilayer. Over 351–621 (NVQKYLQSST…KLNLGAAIYA (271 aa)) the chain is Cytoplasmic. Residues 435-556 (LLQA…HSKQ) and D506 contribute to the a nucleoside 3',5'-cyclic phosphate site. The segment at 549-564 (YRRLHSKQLQHMFRFY) is calmodulin-binding. Residues 569–598 (QTWAACFIQAAWKRHCRRKLSKALREEEGK) enclose the IQ domain.

The protein belongs to the cyclic nucleotide-gated cation channel (TC 1.A.1.5) family. In terms of assembly, homotetramer or heterotetramer.

The protein resides in the cell membrane. Functionally, putative cyclic nucleotide-gated ion channel. The chain is Cyclic nucleotide-gated ion channel 11 (CNGC11) from Arabidopsis thaliana (Mouse-ear cress).